Here is a 312-residue protein sequence, read N- to C-terminus: Serine/threonine-protein kinase ppk11 (312 aa).

The Protein kinase domain maps to 6–258; the sequence is YRDLQLIGQG…AEYLSKHKFI (253 aa). ATP contacts are provided by residues 12–20 and K35; that span reads IGQGSFGSV. The Proton acceptor role is filled by D127.

It belongs to the protein kinase superfamily. Ser/Thr protein kinase family.

The protein localises to the cytoplasm. Its subcellular location is the nucleus. The enzyme catalyses L-seryl-[protein] + ATP = O-phospho-L-seryl-[protein] + ADP + H(+). The catalysed reaction is L-threonyl-[protein] + ATP = O-phospho-L-threonyl-[protein] + ADP + H(+). In Schizosaccharomyces pombe (strain 972 / ATCC 24843) (Fission yeast), this protein is Serine/threonine-protein kinase ppk11 (ppk11).